We begin with the raw amino-acid sequence, 163 residues long: Large ribosomal subunit protein bL17 (163 aa).

The segment at 127–163 (VAKKATRTRRSKKSAEAAAPAAVEAPATEEPKAESAE) is disordered. The span at 129 to 138 (KKATRTRRSK) shows a compositional bias: basic residues. A compositionally biased stretch (low complexity) spans 142–154 (EAAAPAAVEAPAT).

Belongs to the bacterial ribosomal protein bL17 family. In terms of assembly, part of the 50S ribosomal subunit. Contacts protein L32.

This Bacteroides thetaiotaomicron (strain ATCC 29148 / DSM 2079 / JCM 5827 / CCUG 10774 / NCTC 10582 / VPI-5482 / E50) protein is Large ribosomal subunit protein bL17.